The following is an 81-amino-acid chain: Protein GPR15LG (81 aa).

Positions 1-24 are cleaved as a signal peptide; the sequence is MRFLALTSLLCILLLCLSFFSAEG. Cystine bridges form between Cys-40–Cys-63 and Cys-41–Cys-60.

In terms of assembly, interacts with SUSD2; the interaction is direct.

Its subcellular location is the secreted. Highly cationic protein that has multiple functions. Acts as a chemotactic factor that mediates lymphocytes recruitment to epithelia through binding and activation of the G-protein coupled receptor GPR15. May be a tumor suppressor; together with SUSD2 has a growth inhibitory effect on colon cancer cells which includes G1 cell cycle arrest. May regulate keratinocyte proliferation. In addition, through activation of Mas-related G protein-coupled receptors (MRGPRs) contributes to pruritogenesis by activating itch-selective sensory neurons and mast cells degranulation. Functionally, has antimicrobial activity against Gram-positive bacteria, including Staphylococcus aureus and Actinomyces spec., and Mycoplasma hominis and lentivirus. This is Protein GPR15LG (GPR15LG) from Sus scrofa (Pig).